The chain runs to 440 residues: ATP-dependent protease ATPase subunit HslU (440 aa).

Residues Val18, 60-65 (GVGKTE), Asp253, Glu318, and Arg390 contribute to the ATP site.

The protein belongs to the ClpX chaperone family. HslU subfamily. A double ring-shaped homohexamer of HslV is capped on each side by a ring-shaped HslU homohexamer. The assembly of the HslU/HslV complex is dependent on binding of ATP.

The protein localises to the cytoplasm. In terms of biological role, ATPase subunit of a proteasome-like degradation complex; this subunit has chaperone activity. The binding of ATP and its subsequent hydrolysis by HslU are essential for unfolding of protein substrates subsequently hydrolyzed by HslV. HslU recognizes the N-terminal part of its protein substrates and unfolds these before they are guided to HslV for hydrolysis. This is ATP-dependent protease ATPase subunit HslU from Methylococcus capsulatus (strain ATCC 33009 / NCIMB 11132 / Bath).